A 192-amino-acid chain; its full sequence is Phosphoheptose isomerase (192 aa).

One can recognise an SIS domain in the interval Leu-37–Lys-192. Substrate is bound at residue Asn-52–Gly-54. Zn(2+)-binding residues include His-61 and Glu-65. Substrate contacts are provided by residues Glu-65, Asn-93 to Asp-94, Ser-119 to Ser-121, Ser-124, and Gln-172. 2 residues coordinate Zn(2+): Gln-172 and His-180.

It belongs to the SIS family. GmhA subfamily. Homotetramer. Zn(2+) serves as cofactor.

It localises to the cytoplasm. It carries out the reaction 2 D-sedoheptulose 7-phosphate = D-glycero-alpha-D-manno-heptose 7-phosphate + D-glycero-beta-D-manno-heptose 7-phosphate. It participates in carbohydrate biosynthesis; D-glycero-D-manno-heptose 7-phosphate biosynthesis; D-glycero-alpha-D-manno-heptose 7-phosphate and D-glycero-beta-D-manno-heptose 7-phosphate from sedoheptulose 7-phosphate: step 1/1. Functionally, catalyzes the isomerization of sedoheptulose 7-phosphate in D-glycero-D-manno-heptose 7-phosphate. The protein is Phosphoheptose isomerase of Escherichia fergusonii (strain ATCC 35469 / DSM 13698 / CCUG 18766 / IAM 14443 / JCM 21226 / LMG 7866 / NBRC 102419 / NCTC 12128 / CDC 0568-73).